The sequence spans 117 residues: Cysteine rich necrotrophic effector Tox1 (117 aa).

An N-terminal signal peptide occupies residues M1–A17. 8 disulfide bridges follow: C36-C87, C44-C55, C53-C58, C54-C98, C63-C83, C67-C117, C86-C97, and C107-C110. The tract at residues C87 to C117 is chitin-binding domain.

Interacts with host cell wall-associated kinase receptor Snn1.

It is found in the secreted. Functionally, necrotrophic effector that plays a critical role during fungal penetration, via its interaction with the host Snn1 protein. Snn1 is a member of the wall-associated kinase class of receptors, which are known to drive pathways for biotrophic pathogen resistance. Recognition of Tox1 by Snn1 induces mitogen-activated protein kinase genes such as MAPK3 and activates programmed cell death, which allows this necrotroph to gain nutrients and sporulate. Recognition of Tox1 by Snn1 also induces other plant defense responses, including oxidative burst and pathogenesis related (PR) gene expression. The development of necrosis and disease induced by Tox1, and particularly penetration during infection, requires light, which is probably related to the light-dependent expression of host Snn1. Tox1 plays an additional role in providing significant protection from wheat chitinases by binding chitin in the fungal cell wall. The protein is Cysteine rich necrotrophic effector Tox1 of Phaeosphaeria nodorum (strain SN15 / ATCC MYA-4574 / FGSC 10173) (Glume blotch fungus).